Reading from the N-terminus, the 218-residue chain is Glutathione S-transferase Mu 3 (218 aa).

One can recognise a GST N-terminal domain in the interval 2 to 88; the sequence is PMTLGYWNTR…YLGRKHNLCG (87 aa). Glutathione-binding positions include 7–8, 46–50, and 59–60; these read YW, WLSEK, and NL. Residue lysine 50 forms a Glycyl lysine isopeptide (Lys-Gly) (interchain with G-Cter in SUMO2) linkage. Lysine 69 participates in a covalent cross-link: Glycyl lysine isopeptide (Lys-Gly) (interchain with G-Cter in SUMO2). Glutathione is bound at residue 72–73; it reads QS. A GST C-terminal domain is found at 90-208; it reads TEEERIRVDT…KSSRFLPRPV (119 aa).

It belongs to the GST superfamily. Mu family. In terms of assembly, homodimer.

The protein localises to the cytoplasm. It carries out the reaction RX + glutathione = an S-substituted glutathione + a halide anion + H(+). In terms of biological role, conjugation of reduced glutathione to a wide number of exogenous and endogenous hydrophobic electrophiles. The sequence is that of Glutathione S-transferase Mu 3 (Gstm3) from Mus musculus (Mouse).